We begin with the raw amino-acid sequence, 82 residues long: Three-finger toxin MALT0063C (82 aa).

An N-terminal signal peptide occupies residues 1 to 21 (MRTLLLTLVVVTIVCLDLGNS). 4 cysteine pairs are disulfide-bonded: Cys24/Cys42, Cys35/Cys60, Cys64/Cys72, and Cys73/Cys78.

It belongs to the three-finger toxin family. Short-chain subfamily. Expressed by the venom gland.

It is found in the secreted. The polypeptide is Three-finger toxin MALT0063C (Micrurus altirostris (Uruguayan coral snake)).